A 175-amino-acid polypeptide reads, in one-letter code: Glucagon family neuropeptides (175 aa).

The first 23 residues, 1–23, serve as a signal peptide directing secretion; that stretch reads MSGNVYKTLLTLLVYGLIMHCNV. A propeptide spanning residues 24–80 is cleaved from the precursor; the sequence is YCSPDRWTPVPGAKLEEEVYDEDGNTLQDFALRAGAPGGGGPRPRWGRCTALYYPPG. The important for receptor binding stretch occupies residues 149–157; sequence VKKYLAAVL. L157 carries the leucine amide modification. K168 carries the lysine amide modification. A propeptide spanning residues 172 to 175 is cleaved from the precursor; the sequence is VAYL.

The protein belongs to the glucagon family.

It is found in the secreted. Its function is as follows. Primary role of GRF is to release GH from the pituitary. PACAP is a neuropeptide involved in diverse array of physiological processes through activating the PACAP subfamily of class B1 G protein-coupled receptors: VIP receptor 1 (VIPR1), VIP receptor 2 (VIPR2), and PACAP type I receptor (ADCYAP1R1). Exerts neuroprotective and general cytoprotective effects due to anti-apoptotic, anti-inflammatory, and antioxidant actions. Promotes neuron projection development through the RAPGEF2/Rap1/B-Raf/ERK pathway. In chromaffin cells, induces long-lasting increase of intracellular calcium concentrations and neuroendocrine secretion. Involved in the control of glucose homeostasis, induces insulin secretion by pancreatic beta cells. PACAP exists in two bioactive forms from proteolysis of the same precursor protein, PACAP27 and PACAP38, which differ by eleven amino acid residues in the C-terminus. The protein is Glucagon family neuropeptides (ADCYAP1) of Gallus gallus (Chicken).